A 441-amino-acid chain; its full sequence is Glutamate-1-semialdehyde 2,1-aminomutase (441 aa).

Lys-276 is subject to N6-(pyridoxal phosphate)lysine.

Belongs to the class-III pyridoxal-phosphate-dependent aminotransferase family. HemL subfamily. Homodimer. Pyridoxal 5'-phosphate is required as a cofactor.

Its subcellular location is the cytoplasm. The enzyme catalyses (S)-4-amino-5-oxopentanoate = 5-aminolevulinate. The protein operates within porphyrin-containing compound metabolism; protoporphyrin-IX biosynthesis; 5-aminolevulinate from L-glutamyl-tRNA(Glu): step 2/2. The sequence is that of Glutamate-1-semialdehyde 2,1-aminomutase from Rhodococcus jostii (strain RHA1).